We begin with the raw amino-acid sequence, 174 residues long: NADH-quinone oxidoreductase subunit B (174 aa).

Positions 53, 54, 118, and 148 each coordinate [4Fe-4S] cluster.

The protein belongs to the complex I 20 kDa subunit family. In terms of assembly, NDH-1 is composed of 14 different subunits. Subunits NuoB, C, D, E, F, and G constitute the peripheral sector of the complex. [4Fe-4S] cluster is required as a cofactor.

It localises to the cell inner membrane. It carries out the reaction a quinone + NADH + 5 H(+)(in) = a quinol + NAD(+) + 4 H(+)(out). In terms of biological role, NDH-1 shuttles electrons from NADH, via FMN and iron-sulfur (Fe-S) centers, to quinones in the respiratory chain. Couples the redox reaction to proton translocation (for every two electrons transferred, four hydrogen ions are translocated across the cytoplasmic membrane), and thus conserves the redox energy in a proton gradient. This chain is NADH-quinone oxidoreductase subunit B, found in Ruegeria sp. (strain TM1040) (Silicibacter sp.).